We begin with the raw amino-acid sequence, 995 residues long: UPF0182 protein MUL_2505 (995 aa).

7 helical membrane passes run 18–38, 63–83, 113–133, 175–195, 210–230, 259–279, and 287–307; these read VLIL…RLID, FLVF…GLAL, LFGI…AQSY, FVAI…FGGI, IQLV…YWLN, KLIL…AIVL, and IGLV…PMIV. The tract at residues 900–947 is disordered; the sequence is AATGIQPTEGGAPANVPPNNAPSPEALPGTPPSPPTAVPPAPEASVTL. Positions 928–941 are enriched in pro residues; the sequence is GTPPSPPTAVPPAP.

This sequence belongs to the UPF0182 family.

The protein localises to the cell membrane. The sequence is that of UPF0182 protein MUL_2505 from Mycobacterium ulcerans (strain Agy99).